The chain runs to 66 residues: DNA gyrase inhibitor YacG (66 aa).

Residues cysteine 9, cysteine 12, cysteine 28, and cysteine 32 each contribute to the Zn(2+) site.

Belongs to the DNA gyrase inhibitor YacG family. In terms of assembly, interacts with GyrB. Zn(2+) serves as cofactor.

Functionally, inhibits all the catalytic activities of DNA gyrase by preventing its interaction with DNA. Acts by binding directly to the C-terminal domain of GyrB, which probably disrupts DNA binding by the gyrase. This Pseudomonas fluorescens (strain Pf0-1) protein is DNA gyrase inhibitor YacG.